Reading from the N-terminus, the 182-residue chain is Orotate phosphoribosyltransferase (182 aa).

5-phospho-alpha-D-ribose 1-diphosphate contacts are provided by residues Arg-96, Lys-97, Lys-100, His-102, and 122-130 (EDTSTTGGS). Orotate is bound by residues Thr-126 and Arg-154.

This sequence belongs to the purine/pyrimidine phosphoribosyltransferase family. PyrE subfamily. In terms of assembly, homodimer. Requires Mg(2+) as cofactor.

It catalyses the reaction orotidine 5'-phosphate + diphosphate = orotate + 5-phospho-alpha-D-ribose 1-diphosphate. It functions in the pathway pyrimidine metabolism; UMP biosynthesis via de novo pathway; UMP from orotate: step 1/2. Catalyzes the transfer of a ribosyl phosphate group from 5-phosphoribose 1-diphosphate to orotate, leading to the formation of orotidine monophosphate (OMP). In Streptomyces avermitilis (strain ATCC 31267 / DSM 46492 / JCM 5070 / NBRC 14893 / NCIMB 12804 / NRRL 8165 / MA-4680), this protein is Orotate phosphoribosyltransferase.